A 280-amino-acid polypeptide reads, in one-letter code: Meiotic driver wtf35 (280 aa).

Residues M1–P29 are compositionally biased toward basic and acidic residues. 2 disordered regions span residues M1–N49 and N64–D100. The next 4 helical transmembrane spans lie at F105 to C125, W142 to F162, I184 to A204, and S218 to V238.

It belongs to the WTF family. In terms of assembly, homomer. Forms protein aggregates. The two isoforms can interact with each other and with themselves. High sequence similarity is required for their interaction.

It localises to the spore membrane. It is found in the vacuole membrane. The protein localises to the ascus epiplasm. Its subcellular location is the cytoplasm. The protein resides in the endoplasmic reticulum membrane. Promotes unequal transmission of alleles from the parental zygote to progeny spores by acting as poison/antidote system where the poison and antidote proteins are produced from the same locus; the poison component is trans-acting and targets all spores within an ascus whereas the antidote component is spore-specific, leading to poisoning of all progeny that do not inherit the allele. In terms of biological role, localizes isoform 2 to the vacuole thereby facilitating its degradation. Its function is as follows. Forms toxic aggregates that disrupt spore maturation. This Schizosaccharomyces pombe (Fission yeast) protein is Meiotic driver wtf35.